The following is a 195-amino-acid chain: dTTP/UTP pyrophosphatase (195 aa).

The active-site Proton acceptor is D73.

It belongs to the Maf family. YhdE subfamily. A divalent metal cation serves as cofactor.

Its subcellular location is the cytoplasm. It catalyses the reaction dTTP + H2O = dTMP + diphosphate + H(+). The enzyme catalyses UTP + H2O = UMP + diphosphate + H(+). In terms of biological role, nucleoside triphosphate pyrophosphatase that hydrolyzes dTTP and UTP. May have a dual role in cell division arrest and in preventing the incorporation of modified nucleotides into cellular nucleic acids. The chain is dTTP/UTP pyrophosphatase from Deinococcus radiodurans (strain ATCC 13939 / DSM 20539 / JCM 16871 / CCUG 27074 / LMG 4051 / NBRC 15346 / NCIMB 9279 / VKM B-1422 / R1).